Reading from the N-terminus, the 584-residue chain is ATP-dependent ubiquitin transferase-like protein Cap2 (584 aa).

Positions 1–137 (MKQELHHTLL…SGTSNDVELE (137 aa)) are E2-like domain. Residue C90 is the For E2-like domain of the active site. The interval 138–338 (GEFSAYWQSE…LLSRNQSRPD (201 aa)) is linker domain. The interval 339 to 584 (VGNLSQKRIA…RFSGCNICDE (246 aa)) is adenylation plus E1-like domain. The For E1-like domain role is filled by C522.

The protein in the C-terminal section; belongs to the HesA/MoeB/ThiF family. As to quaternary structure, interacts with CD-NTase DncV in the presence and absence of phage T2. A Cap2 dimer is bound on either side by a DncV monomer.

Functionally, CD-NTase priming component of a CBASS antiviral system. CBASS (cyclic oligonucleotide-based antiphage signaling system) provides immunity against bacteriophages. The CD-NTase protein (DncV) synthesizes cyclic nucleotides in response to infection; these serve as specific second messenger signals. The signals activate a diverse range of effectors, leading to bacterial cell death and thus abortive phage infection. A type II-A(GA) CBASS system. In terms of biological role, primes DncV; acts as a protein transferase, conjugating DncV, the CD-NTase, to unidentified target(s) in the cell via an E1-E2 ubiquitin transferase-like mechanism. During the conjugation reaction DncV is probably transiently attached to AMP. Protein conjugation requires ATP. Its function is as follows. Protects E.coli against phage infection. When the CBASS operon (capV-dncV-cap2-cap3) is introduced in E.coli MG1655 there is about 100-fold protection against phages P1 and T2. When the operon is introduced in E.coli MG1655 there is a more than 10(3) decrease in the efficiency of T2 plaque formation. Protects 100-fold against phage T5, offers no protection against T7. When the operon is introduced in E.coli MG1655 it protects against phages T2, T4, T5 and T6. Another paper shows the operon confers protection against phages P1, T2, T5 and T6 but not T4 or lambda. This Vibrio cholerae serotype O1 (strain ATCC 39315 / El Tor Inaba N16961) protein is ATP-dependent ubiquitin transferase-like protein Cap2.